Reading from the N-terminus, the 65-residue chain is Large ribosomal subunit protein bL35 (65 aa).

Over residues 1-16 (MPKMKTKKSAAKRFKV) the composition is skewed to basic residues. Residues 1–25 (MPKMKTKKSAAKRFKVRGSGSIKRG) form a disordered region.

It belongs to the bacterial ribosomal protein bL35 family.

This Bordetella parapertussis (strain 12822 / ATCC BAA-587 / NCTC 13253) protein is Large ribosomal subunit protein bL35.